A 459-amino-acid polypeptide reads, in one-letter code: Protein FAM90A27P (459 aa).

Over residues 1–10 (MARHSVHHQA) the composition is skewed to basic residues. Disordered stretches follow at residues 1-41 (MARH…ESRV), 74-136 (SHKE…WKEP), 153-239 (HTTK…ALQP), and 259-459 (PDAD…SDSD). Over residues 125-136 (PQEKMQEAWKEP) the composition is skewed to basic and acidic residues. Residues 184 to 194 (HNDSPQLSTCG) are compositionally biased toward polar residues. Over residues 341 to 353 (KATAETAATKTAT) the composition is skewed to low complexity. The span at 415 to 427 (PPENSASAQSPRF) shows a compositional bias: polar residues.

This sequence belongs to the FAM90 family.

The polypeptide is Protein FAM90A27P (FAM90A27P) (Homo sapiens (Human)).